The following is a 236-amino-acid chain: Ribose-5-phosphate isomerase (236 aa).

Residues 27–30 (TGST), 84–87 (DGTD), and 97–100 (KGRG) each bind substrate. E106 serves as the catalytic Proton acceptor. K124 serves as a coordination point for substrate.

The protein belongs to the ribose 5-phosphate isomerase family. Homodimer.

The catalysed reaction is aldehydo-D-ribose 5-phosphate = D-ribulose 5-phosphate. The protein operates within carbohydrate degradation; pentose phosphate pathway; D-ribose 5-phosphate from D-ribulose 5-phosphate (non-oxidative stage): step 1/1. In terms of biological role, involved in the first step of the non-oxidative branch of the pentose phosphate pathway. It catalyzes the reversible conversion of ribose-5-phosphate to ribulose 5-phosphate. This is Ribose-5-phosphate isomerase from Plasmodium falciparum (isolate 3D7).